We begin with the raw amino-acid sequence, 183 residues long: NADH-quinone oxidoreductase subunit B 2 (183 aa).

[4Fe-4S] cluster-binding residues include cysteine 47, cysteine 48, cysteine 113, and cysteine 142.

This sequence belongs to the complex I 20 kDa subunit family. As to quaternary structure, NDH-1 is composed of 14 different subunits. Subunits NuoB, C, D, E, F, and G constitute the peripheral sector of the complex. [4Fe-4S] cluster is required as a cofactor.

It is found in the cell inner membrane. It carries out the reaction a quinone + NADH + 5 H(+)(in) = a quinol + NAD(+) + 4 H(+)(out). Functionally, NDH-1 shuttles electrons from NADH, via FMN and iron-sulfur (Fe-S) centers, to quinones in the respiratory chain. The immediate electron acceptor for the enzyme in this species is believed to be ubiquinone. Couples the redox reaction to proton translocation (for every two electrons transferred, four hydrogen ions are translocated across the cytoplasmic membrane), and thus conserves the redox energy in a proton gradient. This chain is NADH-quinone oxidoreductase subunit B 2, found in Anaeromyxobacter sp. (strain Fw109-5).